We begin with the raw amino-acid sequence, 578 residues long: Glutamate--tRNA ligase (578 aa).

The 'HIGH' region motif lies at 97–107; sequence PNPDFVIHLGN.

This sequence belongs to the class-I aminoacyl-tRNA synthetase family. Glutamate--tRNA ligase type 2 subfamily.

Its subcellular location is the cytoplasm. The enzyme catalyses tRNA(Glu) + L-glutamate + ATP = L-glutamyl-tRNA(Glu) + AMP + diphosphate. Its function is as follows. Catalyzes the attachment of glutamate to tRNA(Glu) in a two-step reaction: glutamate is first activated by ATP to form Glu-AMP and then transferred to the acceptor end of tRNA(Glu). In Hyperthermus butylicus (strain DSM 5456 / JCM 9403 / PLM1-5), this protein is Glutamate--tRNA ligase.